A 197-amino-acid chain; its full sequence is dITP/XTP pyrophosphatase (197 aa).

8–13 (TGNAGK) serves as a coordination point for substrate. Mg(2+) is bound by residues E40 and D69. D69 serves as the catalytic Proton acceptor. Residues S70, 154–157 (FGYD), K177, and 182–183 (HR) each bind substrate.

It belongs to the HAM1 NTPase family. Homodimer. It depends on Mg(2+) as a cofactor.

The enzyme catalyses XTP + H2O = XMP + diphosphate + H(+). It carries out the reaction dITP + H2O = dIMP + diphosphate + H(+). It catalyses the reaction ITP + H2O = IMP + diphosphate + H(+). Functionally, pyrophosphatase that catalyzes the hydrolysis of nucleoside triphosphates to their monophosphate derivatives, with a high preference for the non-canonical purine nucleotides XTP (xanthosine triphosphate), dITP (deoxyinosine triphosphate) and ITP. Seems to function as a house-cleaning enzyme that removes non-canonical purine nucleotides from the nucleotide pool, thus preventing their incorporation into DNA/RNA and avoiding chromosomal lesions. The polypeptide is dITP/XTP pyrophosphatase (rdgB) (Escherichia coli O157:H7).